We begin with the raw amino-acid sequence, 341 residues long: Methionine import ATP-binding protein MetN 2 (341 aa).

The region spanning 2-241 is the ABC transporter domain; that stretch reads ILLENVKKIY…PQQDITKRFV (240 aa). Residue 38–45 coordinates ATP; that stretch reads GYSGAGKS.

It belongs to the ABC transporter superfamily. Methionine importer (TC 3.A.1.24) family. In terms of assembly, the complex is composed of two ATP-binding proteins (MetN), two transmembrane proteins (MetI) and a solute-binding protein (MetQ).

The protein resides in the cell membrane. The enzyme catalyses L-methionine(out) + ATP + H2O = L-methionine(in) + ADP + phosphate + H(+). It carries out the reaction D-methionine(out) + ATP + H2O = D-methionine(in) + ADP + phosphate + H(+). Part of the ABC transporter complex MetNIQ involved in methionine import. Responsible for energy coupling to the transport system. The polypeptide is Methionine import ATP-binding protein MetN 2 (Bacillus thuringiensis subsp. konkukian (strain 97-27)).